Consider the following 197-residue polypeptide: Protein LURP-one-related 9 (197 aa).

Belongs to the LOR family.

Functionally, might be related to the phospholipid scramblase and tubby-like superfamily of membrane tethered transcription factors. This Arabidopsis thaliana (Mouse-ear cress) protein is Protein LURP-one-related 9.